A 461-amino-acid polypeptide reads, in one-letter code: Trigger factor (461 aa).

One can recognise a PPIase FKBP-type domain in the interval 166-245 (GDFANIDLTA…VNSVKAEELP (80 aa)).

Belongs to the FKBP-type PPIase family. Tig subfamily.

Its subcellular location is the cytoplasm. It catalyses the reaction [protein]-peptidylproline (omega=180) = [protein]-peptidylproline (omega=0). Its function is as follows. Involved in protein export. Acts as a chaperone by maintaining the newly synthesized protein in an open conformation. Functions as a peptidyl-prolyl cis-trans isomerase. The polypeptide is Trigger factor (Bifidobacterium animalis subsp. lactis (strain AD011)).